The sequence spans 138 residues: MAPKAAEKKPAGKKPAEKAPAEKLPKAEKKITKEGGSEKKKKKSKKNIETYKIYIFKVLKQVHPDIGISGKAMGIMNSFINDIFEKLAQESSRLARYNKKPTITSREIQTAVRLVLPGELSKHAVSEGTKAVTKFTSS.

Residues 1-38 (MAPKAAEKKPAGKKPAEKAPAEKLPKAEKKITKEGGSE) are compositionally biased toward basic and acidic residues. The disordered stretch occupies residues 1 to 45 (MAPKAAEKKPAGKKPAEKAPAEKLPKAEKKITKEGGSEKKKKKSK). Ala2 carries the post-translational modification N,N,N-trimethylalanine; alternate. Position 2 is a n,N-dimethylalanine; alternate (Ala2). Ala2 is modified (N-methylalanine; alternate). Position 4 is an N6-methyllysine (Lys4). N6-acetyllysine occurs at positions 8 and 13. An N6,N6-dimethyllysine modification is found at Lys14. N6-acetyllysine occurs at positions 18, 23, 29, and 30. Residue Lys134 forms a Glycyl lysine isopeptide (Lys-Gly) (interchain with G-Cter in ubiquitin) linkage.

This sequence belongs to the histone H2B family. As to quaternary structure, the nucleosome is a histone octamer containing two molecules each of H2A, H2B, H3 and H4 assembled in one H3-H4 heterotetramer and two H2A-H2B heterodimers. The octamer wraps approximately 147 bp of DNA. Can be acetylated to form H2BK6ac, H2BK33ac and H2BK34ac. In terms of processing, monoubiquitinated by BRE1 to form H2BK143ub1 and deubiquitinated by UBP26. Required for heterochromatic histone H3 di- and trimethylation at H3K4me. May give a specific tag for epigenetic transcriptional activation.

It is found in the nucleus. Its subcellular location is the chromosome. Its function is as follows. Core component of nucleosome. Nucleosomes wrap and compact DNA into chromatin, limiting DNA accessibility to the cellular machineries which require DNA as a template. Histones thereby play a central role in transcription regulation, DNA repair, DNA replication and chromosomal stability. DNA accessibility is regulated via a complex set of post-translational modifications of histones, also called histone code, and nucleosome remodeling. The chain is Histone H2B.8 from Arabidopsis thaliana (Mouse-ear cress).